The primary structure comprises 216 residues: N-(5'-phosphoribosyl)anthranilate isomerase (216 aa).

Belongs to the TrpF family.

It catalyses the reaction N-(5-phospho-beta-D-ribosyl)anthranilate = 1-(2-carboxyphenylamino)-1-deoxy-D-ribulose 5-phosphate. Its pathway is amino-acid biosynthesis; L-tryptophan biosynthesis; L-tryptophan from chorismate: step 3/5. This chain is N-(5'-phosphoribosyl)anthranilate isomerase, found in Leptospira borgpetersenii serovar Hardjo-bovis (strain JB197).